The chain runs to 564 residues: MSYIVDLQVRGSSLRVIKCMFREDEQISSLHSGSDSKQNSNKKLGEFLNLLKAVVKRKLESFPKDRLKTSIITGQELMREGQGSIEIKDPPTEAQQHLIRSLAKVLLHQFSSINGKVNTVNEGQDNLFLSLFVKKISIEQQSTSHVSIKLNFHEKINLGQHIDSILDSEETNESDTYHMGSVDEFIIYPFCCLEEQDELKNGSILSTEFDKIDLELDEDDGFEGETLNNCINSVGNFDIPLSKQTLNLVNISYLPGTTFEGQWESLYFGNNIKERLYSYATISLKIARFKQTGDSNQEDITTLITNNKLLLVHGPPGTGKTTLCKALCQKLSVRREFSDGSDTIDTNYKGIIIELSCARIFSKWFGESSKNISIVFKDIEELLKVNEGRGIFICLLIDEVEAIASSRTNLSSRNESTDGIRVVNTLLTQLDRLKKYHNFLALATSNLLDSLDDAFVDRADGVFYVGNPTAEGILHILKVCIEEMITSGIILFHARSTGVKFFNKYQDILRKIAIKCSTVDISGRTIRKLPLMCLSEYFRTFPVDDDEFVLALAMSARKLSAARK.

ATP is bound at residue 314-321; that stretch reads GPPGTGKT.

This sequence belongs to the AAA ATPase family. PCH2 subfamily.

It localises to the nucleus. The protein localises to the nucleolus. It is found in the chromosome. Functionally, required for the pachytene checkpoint, the meiotic checkpoint that prevents chromosome segregation when defects in recombination and synaptonemal complex formation occurred. Represses meiotic recombination in the rDNA, probably by excluding the meiosis-specific protein HOP1 from the nucleolar region. This is Pachytene checkpoint protein 2 (PCH2) from Saccharomyces cerevisiae (strain ATCC 204508 / S288c) (Baker's yeast).